The following is a 390-amino-acid chain: 1-deoxy-D-xylulose 5-phosphate reductoisomerase (390 aa).

8 residues coordinate NADPH: T10, G11, S12, I13, G36, R37, N38, and N121. 1-deoxy-D-xylulose 5-phosphate is bound at residue K122. E123 is a binding site for NADPH. D147 contributes to the Mn(2+) binding site. Residues S148, E149, S173, and H196 each coordinate 1-deoxy-D-xylulose 5-phosphate. E149 serves as a coordination point for Mn(2+). Residue G202 participates in NADPH binding. 1-deoxy-D-xylulose 5-phosphate-binding residues include S209, N214, K215, and E218. E218 contributes to the Mn(2+) binding site. The disordered stretch occupies residues 367-390 (AASEHGRREAEKRVGARAHAPASR). Over residues 370 to 380 (EHGRREAEKRV) the composition is skewed to basic and acidic residues.

This sequence belongs to the DXR family. The cofactor is Mg(2+). Requires Mn(2+) as cofactor.

The catalysed reaction is 2-C-methyl-D-erythritol 4-phosphate + NADP(+) = 1-deoxy-D-xylulose 5-phosphate + NADPH + H(+). Its pathway is isoprenoid biosynthesis; isopentenyl diphosphate biosynthesis via DXP pathway; isopentenyl diphosphate from 1-deoxy-D-xylulose 5-phosphate: step 1/6. Its function is as follows. Catalyzes the NADPH-dependent rearrangement and reduction of 1-deoxy-D-xylulose-5-phosphate (DXP) to 2-C-methyl-D-erythritol 4-phosphate (MEP). The chain is 1-deoxy-D-xylulose 5-phosphate reductoisomerase from Anaeromyxobacter dehalogenans (strain 2CP-1 / ATCC BAA-258).